The sequence spans 203 residues: Histidine biosynthesis bifunctional protein HisIE (203 aa).

The segment at 1–114 (MLTEQQRREL…FGDASHQWLF (114 aa)) is phosphoribosyl-AMP cyclohydrolase. Residues 115-203 (LYQLEQLLAE…VIDDLRKRHQ (89 aa)) are phosphoribosyl-ATP pyrophosphohydrolase.

The protein in the N-terminal section; belongs to the PRA-CH family. In the C-terminal section; belongs to the PRA-PH family.

Its subcellular location is the cytoplasm. The catalysed reaction is 1-(5-phospho-beta-D-ribosyl)-ATP + H2O = 1-(5-phospho-beta-D-ribosyl)-5'-AMP + diphosphate + H(+). The enzyme catalyses 1-(5-phospho-beta-D-ribosyl)-5'-AMP + H2O = 1-(5-phospho-beta-D-ribosyl)-5-[(5-phospho-beta-D-ribosylamino)methylideneamino]imidazole-4-carboxamide. It participates in amino-acid biosynthesis; L-histidine biosynthesis; L-histidine from 5-phospho-alpha-D-ribose 1-diphosphate: step 2/9. Its pathway is amino-acid biosynthesis; L-histidine biosynthesis; L-histidine from 5-phospho-alpha-D-ribose 1-diphosphate: step 3/9. This chain is Histidine biosynthesis bifunctional protein HisIE (hisI), found in Salmonella typhi.